A 196-amino-acid chain; its full sequence is Carnitine operon protein CaiE (196 aa).

The tract at residues Leu-176–Arg-196 is disordered.

Belongs to the transferase hexapeptide repeat family.

It participates in amine and polyamine metabolism; carnitine metabolism. Overproduction of CaiE stimulates the activity of CaiB and CaiD. This chain is Carnitine operon protein CaiE, found in Escherichia fergusonii (strain ATCC 35469 / DSM 13698 / CCUG 18766 / IAM 14443 / JCM 21226 / LMG 7866 / NBRC 102419 / NCTC 12128 / CDC 0568-73).